The chain runs to 139 residues: MKPAARRRARECAVQALYSWQLSHNDIADVEYQFLAEQDVKDVDVLYFRELLSGVATNSAYLDGLMKPYLSRQLEELGQVEKAVLRIALFELSKRDDVPYKVAINEAIELAKTFGAEDSHKFVNGVLDKAAPVIRPRKK.

It belongs to the NusB family.

Functionally, involved in transcription antitermination. Required for transcription of ribosomal RNA (rRNA) genes. Binds specifically to the boxA antiterminator sequence of the ribosomal RNA (rrn) operons. The protein is Transcription antitermination protein NusB of Klebsiella pneumoniae (strain 342).